The sequence spans 1581 residues: MKEIIKLSILGKDSIHIGLHLWPHITNELFTCIFSPTYVIITDSNIETLYIPSFKTYFISMAKQRSINSRLLFFTIPPGEKSKSRKTKALIEDWLLSEKCTRDTVIIAIGGGVIGDLVGYVSATFMRGVRFIQIPTTLLAMVDSSIGGKNSINTSYGKNAIGTIWQPERIFIDFTFLETLTEKEFINGIAELIKTIIIWDESEFASLENISEKIAKTVRSMSLTSNKHSKFNEIIKDLKRYIISSIKIKAHIVSIDEKEKDLRTLLNFGHSIGHAIETVLAPYILHGESISIGMVKEAELSRHLGILNPNVVSRLIKCLNTWGLPTSFKDRRFKEVILGKKHLIEDILEIMSIDKKNDSNNKKIVLLSAIGKTYEKKASSVSDDDIRTILSQNILLYGIPLNAFQKHTTITLPGSKSISNRALILASLSNGICYLKNFLHSDDTYYMLSALEKLNAAEFKWEQDGDVLVVKGKSGYLENPQMELYLGNSGTTARFLTSICTLVQPNSRENHLILTGSNRMKQRPIGPLVDALKNNGCCIEYLELENCLPLLIKPKEIGLYGGNINLSATVSSQYVSSILMCSPYAKTQVTLSLIGGKPISQPYIDMTISMMSSFGIKVTRSHSKENTYYIPKGCYTCPSEYIIEGDATSATYPLAIAAITGGSCTISNVGSASLQGDSKFSEYILKPMGCEVVQSPTTTYIKGPPKGKLKSLGSINMESMTDTFLTAAVLASVAYEESKPYVTKITGISNQRIKECNRINAMVCELKKFGIEAGELPDGIYVKALNTSNLPYSVEGINCYNDHRIAMSFSVLACISSKPTTILDKACVNKTWPYWWDILNSTFKVQMKGIEFDLNPTINSSILHHPSECTIFLIGMRGAGKTTLGQLAANFLGREFIDLDSIIEEDIKTTILEFIQKYSWDVFRRKELHFLKTLLTEKKENYIISCGGGIIETEEARDLLISYIEANGIVIHIHRNIQDIIKYLNTDKTRAPYQDNIMHVWERRKRWYNLCSSHQFHMTSTDPTEFKKNIPLNLKSSFNNFLRTITGKNNIFSLILKKKRSYFLSLAFSDLENIFSLLDIITAGCDAIEIRIDLFQKPEEIDKYPSLEYIAEKIFLLRQKTSLPLIYTLRTTNHGGSFLSSEKKLAKEYILHGAKWGFEFLDIELDIASELFKTINNSWPYTKIIASYHNIEKPISCDDFEWIQKYKEAQHYGHIIKLVGTSSSIEDNFFLEEFKSKFINKKVPSIIINTGIKGQLSRIMNTFMTPVTHPSLPSKIAPGQLSIKEINTALHIMGLLPEKKYFLFGKPIKHSQSPNIHNLGFEILGLPYKYQLFETDSISELKEILHLEEFGGASVTIPLKTNISILLDEISDHAALIGSVNTITRTYNNGQYILKGENTDWQGIIKAIKNFNKFEKSFENFSGFIIGAGGASRAAIYALLSLGISPIYLINRSKDKLNKLYHFFNTNHIIPITEYHELNNINFDIRIGISTIPTDNPIDPSVLEIAKIFFNLKRKSSEGIFLDMAYGSNTTDLTIIAKACNWKIIHGLEILLEQGSEQFLLWTETYIPYNQVKYAILGPNK.

A 3-dehydroquinate synthase region spans residues 1–383 (MKEIIKLSIL…YEKKASSVSD (383 aa)). NAD(+) is bound by residues 43 to 45 (DSN), 80 to 83 (EKSK), 111 to 113 (GGV), and aspartate 116. Arginine 127 contributes to the 7-phospho-2-dehydro-3-deoxy-D-arabino-heptonate binding site. 136 to 137 (TT) contributes to the NAD(+) binding site. 7-phospho-2-dehydro-3-deoxy-D-arabino-heptonate-binding residues include aspartate 143 and lysine 149. Residue lysine 158 coordinates NAD(+). Asparagine 159 lines the 7-phospho-2-dehydro-3-deoxy-D-arabino-heptonate pocket. Residues 176–179 (FLET) and asparagine 187 contribute to the NAD(+) site. Zn(2+) is bound at residue glutamate 191. Residues 191-194 (ELIK) and lysine 249 contribute to the 7-phospho-2-dehydro-3-deoxy-D-arabino-heptonate site. Catalysis depends on glutamate 259, which acts as the Proton acceptor; for 3-dehydroquinate synthase activity. 7-phospho-2-dehydro-3-deoxy-D-arabino-heptonate is bound by residues 263 to 267 (RTLLN) and histidine 270. Position 270 (histidine 270) interacts with Zn(2+). The active-site Proton acceptor; for 3-dehydroquinate synthase activity is histidine 274. 7-phospho-2-dehydro-3-deoxy-D-arabino-heptonate contacts are provided by histidine 286 and lysine 355. Histidine 286 is a binding site for Zn(2+). Residues 396-845 (LYGIPLNAFQ…WDILNSTFKV (450 aa)) are EPSP synthase. Cysteine 827 serves as the catalytic For EPSP synthase activity. Residues 868–1065 (ECTIFLIGMR…LKKKRSYFLS (198 aa)) are shikimate kinase. ATP is bound at residue 875–882 (GMRGAGKT). The 3-dehydroquinase stretch occupies residues 1066 to 1285 (LAFSDLENIF…IAPGQLSIKE (220 aa)). Catalysis depends on histidine 1189, which acts as the Proton acceptor; for 3-dehydroquinate dehydratase activity. The active-site Schiff-base intermediate with substrate; for 3-dehydroquinate dehydratase activity is the lysine 1217. Residues 1298-1581 (EKKYFLFGKP…VKYAILGPNK (284 aa)) are shikimate dehydrogenase.

It in the N-terminal section; belongs to the sugar phosphate cyclases superfamily. Dehydroquinate synthase family. In the 2nd section; belongs to the EPSP synthase family. This sequence in the 3rd section; belongs to the shikimate kinase family. The protein in the 4th section; belongs to the type-I 3-dehydroquinase family. It in the C-terminal section; belongs to the shikimate dehydrogenase family. In terms of assembly, homodimer. Zn(2+) is required as a cofactor.

The protein localises to the cytoplasm. It catalyses the reaction 7-phospho-2-dehydro-3-deoxy-D-arabino-heptonate = 3-dehydroquinate + phosphate. The enzyme catalyses 3-dehydroquinate = 3-dehydroshikimate + H2O. It carries out the reaction shikimate + NADP(+) = 3-dehydroshikimate + NADPH + H(+). The catalysed reaction is shikimate + ATP = 3-phosphoshikimate + ADP + H(+). It catalyses the reaction 3-phosphoshikimate + phosphoenolpyruvate = 5-O-(1-carboxyvinyl)-3-phosphoshikimate + phosphate. Its pathway is metabolic intermediate biosynthesis; chorismate biosynthesis; chorismate from D-erythrose 4-phosphate and phosphoenolpyruvate: step 2/7. It functions in the pathway metabolic intermediate biosynthesis; chorismate biosynthesis; chorismate from D-erythrose 4-phosphate and phosphoenolpyruvate: step 3/7. The protein operates within metabolic intermediate biosynthesis; chorismate biosynthesis; chorismate from D-erythrose 4-phosphate and phosphoenolpyruvate: step 4/7. It participates in metabolic intermediate biosynthesis; chorismate biosynthesis; chorismate from D-erythrose 4-phosphate and phosphoenolpyruvate: step 5/7. Its pathway is metabolic intermediate biosynthesis; chorismate biosynthesis; chorismate from D-erythrose 4-phosphate and phosphoenolpyruvate: step 6/7. In terms of biological role, the AROM polypeptide catalyzes 5 consecutive enzymatic reactions in prechorismate polyaromatic amino acid biosynthesis. In Pneumocystis carinii, this protein is Pentafunctional AROM polypeptide (arom).